The chain runs to 168 residues: Probable chorismate pyruvate-lyase (168 aa).

3 residues coordinate substrate: arginine 75, isoleucine 114, and glutamate 155.

The protein belongs to the UbiC family.

The protein localises to the cytoplasm. It catalyses the reaction chorismate = 4-hydroxybenzoate + pyruvate. It functions in the pathway cofactor biosynthesis; ubiquinone biosynthesis. Functionally, removes the pyruvyl group from chorismate, with concomitant aromatization of the ring, to provide 4-hydroxybenzoate (4HB) for the ubiquinone pathway. This Psychrobacter cryohalolentis (strain ATCC BAA-1226 / DSM 17306 / VKM B-2378 / K5) protein is Probable chorismate pyruvate-lyase.